We begin with the raw amino-acid sequence, 103 residues long: Large ribosomal subunit protein uL24 (103 aa).

Belongs to the universal ribosomal protein uL24 family. Part of the 50S ribosomal subunit.

Functionally, one of two assembly initiator proteins, it binds directly to the 5'-end of the 23S rRNA, where it nucleates assembly of the 50S subunit. One of the proteins that surrounds the polypeptide exit tunnel on the outside of the subunit. The chain is Large ribosomal subunit protein uL24 from Vesicomyosocius okutanii subsp. Calyptogena okutanii (strain HA).